The following is a 431-amino-acid chain: Glutamate-1-semialdehyde 2,1-aminomutase (431 aa).

At lysine 265 the chain carries N6-(pyridoxal phosphate)lysine.

This sequence belongs to the class-III pyridoxal-phosphate-dependent aminotransferase family. HemL subfamily. Homodimer. Pyridoxal 5'-phosphate serves as cofactor.

The protein localises to the cytoplasm. It catalyses the reaction (S)-4-amino-5-oxopentanoate = 5-aminolevulinate. It functions in the pathway porphyrin-containing compound metabolism; protoporphyrin-IX biosynthesis; 5-aminolevulinate from L-glutamyl-tRNA(Glu): step 2/2. This is Glutamate-1-semialdehyde 2,1-aminomutase from Aliivibrio fischeri (strain ATCC 700601 / ES114) (Vibrio fischeri).